The primary structure comprises 164 residues: Large ribosomal subunit protein uL15 (164 aa).

Polar residues predominate over residues M1 to K14. A disordered region spans residues M1 to V35. The span at R21–V35 shows a compositional bias: gly residues.

It belongs to the universal ribosomal protein uL15 family. As to quaternary structure, part of the 50S ribosomal subunit.

Binds to the 23S rRNA. This is Large ribosomal subunit protein uL15 from Methylocella silvestris (strain DSM 15510 / CIP 108128 / LMG 27833 / NCIMB 13906 / BL2).